The sequence spans 416 residues: 1-deoxy-D-xylulose 5-phosphate reductoisomerase (416 aa).

NADPH is bound by residues Thr10, Gly11, Ser12, Ile13, Gly36, Arg37, Asn38, and Asn130. A 1-deoxy-D-xylulose 5-phosphate-binding site is contributed by Lys131. Position 132 (Glu132) interacts with NADPH. Position 156 (Asp156) interacts with Mn(2+). Residues Ser157, Glu158, Ser194, and His217 each contribute to the 1-deoxy-D-xylulose 5-phosphate site. Glu158 lines the Mn(2+) pocket. Gly223 contacts NADPH. 1-deoxy-D-xylulose 5-phosphate is bound by residues Ser230, Asn235, Lys236, and Glu239. Glu239 is a Mn(2+) binding site.

It belongs to the DXR family. Mg(2+) is required as a cofactor. It depends on Mn(2+) as a cofactor.

It carries out the reaction 2-C-methyl-D-erythritol 4-phosphate + NADP(+) = 1-deoxy-D-xylulose 5-phosphate + NADPH + H(+). It functions in the pathway isoprenoid biosynthesis; isopentenyl diphosphate biosynthesis via DXP pathway; isopentenyl diphosphate from 1-deoxy-D-xylulose 5-phosphate: step 1/6. Its function is as follows. Catalyzes the NADPH-dependent rearrangement and reduction of 1-deoxy-D-xylulose-5-phosphate (DXP) to 2-C-methyl-D-erythritol 4-phosphate (MEP). The sequence is that of 1-deoxy-D-xylulose 5-phosphate reductoisomerase from Synechococcus sp. (strain CC9311).